Here is a 176-residue protein sequence, read N- to C-terminus: Sigma intracellular receptor 2 (176 aa).

The Cytoplasmic portion of the chain corresponds to 1–9 (MGALAARRC). The chain crosses the membrane as a helical span at residues 10–30 (VEWLLGLYFVSHIPITLFIDL). In terms of domain architecture, EXPERA spans 10 to 158 (VEWLLGLYFV…PYLIIPLILL (149 aa)). Over 31 to 68 (QAVLPPELYPQEFSNLLRWYSKEFKDPLMQEPPVWFKS) the chain is Lumenal. The helical transmembrane segment at 69-89 (FLLCELVFQLPFFPIAAYAFF) threads the bilayer. 2 residues coordinate cholesterol: valine 75 and glutamine 77. The Cytoplasmic segment spans residues 90–99 (KGSCRWIRIP). The chain crosses the membrane as a helical span at residues 100–120 (AIIYAAHTITTLIPILYTLLF). Residues 121–140 (EDFSKAVAFKGQRPESFRER) lie on the Lumenal side of the membrane. Residues 141–161 (LTLVGVYAPYLIIPLILLLFM) form a helical membrane-spanning segment. Topologically, residues 162-176 (LRNPYYKYEEKRKKK) are cytoplasmic. The ER retention motif motif lies at 172–176 (KRKKK).

The protein belongs to the TMEM97/sigma-2 receptor family. Homodimer. Interacts with NPC1; the interaction impairs NPC1-mediated cholesterol transport. Interacts with PGRMC1 and LDLR; the interaction increases LDL internalization. Interacts with histatin 1/HTN1; the interaction induces HTN1-stimulating wound healing. Interacts with TSPO.

Its subcellular location is the rough endoplasmic reticulum membrane. The protein resides in the nucleus membrane. Its function is as follows. Sigma-2 receptor which contributes to ameliorate dysfunctional cellular processes and slow degenerative progression by regulating cell functions including cholesterol biosynthesis/trafficking, membrane trafficking, autophagy, lipid membrane-bound protein trafficking, and receptor stabilization at the cell surface. Forms a ternary complex with PGRMC1 receptor and low density lipoprotein receptor/LDLR at the plasma membrane, which increases LDLR-mediated LDL cholesterol internalization. Decreases lysosomal sterol transporter NPC1 availability to the cell, probably through NPC1-binding, hence controlling lipid transport, including cholesterol and LBPA, outside of late endosome/lysosome. Binds regio- and stereoselective ligand 20(S)-hydroxycholesterol (20(S)-OHC) which enhances TMEM97-NPC1 interaction and decreases TMEM97-PGRMC1 and TMEM97-TSPO interactions, thereby linking OHC binding to cholesterol homeostasis. Also able to bind cholesterol. Binds histatin 1 (Hst 1)/HN1 salivary peptide at the ER membrane, which is critical for increasing mitochondria-ER contacts and stimulating Hst1 wound healing properties. May alter the activity of some cytochrome P450 proteins. Although shows homologies with sterol isomerases (EXPERA domain), not able to catalyze sterol isomerization. However, may act as sensors of these molecules. Acts as a quality control factor in the ER, promoting the proteolytic degradation of nonproductive and extramitochondrial precursor proteins in the ER membrane thus removing them from the ER surface. This is Sigma intracellular receptor 2 from Mus musculus (Mouse).